Here is a 1082-residue protein sequence, read N- to C-terminus: DNA-directed RNA polymerase subunit beta (1082 aa).

Belongs to the RNA polymerase beta chain family. As to quaternary structure, in plastids the minimal PEP RNA polymerase catalytic core is composed of four subunits: alpha, beta, beta', and beta''. When a (nuclear-encoded) sigma factor is associated with the core the holoenzyme is formed, which can initiate transcription.

It is found in the plastid. The protein localises to the chloroplast. It carries out the reaction RNA(n) + a ribonucleoside 5'-triphosphate = RNA(n+1) + diphosphate. In terms of biological role, DNA-dependent RNA polymerase catalyzes the transcription of DNA into RNA using the four ribonucleoside triphosphates as substrates. In Euglena gracilis, this protein is DNA-directed RNA polymerase subunit beta.